Here is a 1088-residue protein sequence, read N- to C-terminus: RNA-directed RNA polymerase (1088 aa).

In terms of domain architecture, RdRp catalytic spans 501–687; the sequence is LSYGDVTRFL…AKRYIAGGKI (187 aa).

It belongs to the reoviridae RNA-directed RNA polymerase family. Interacts with VP3 (Potential). Interacts with VP2; this interaction activates VP1. Interacts with NSP5; this interaction is probably necessary for the formation of functional virus factories. Interacts with NSP2; this interaction is weak. It depends on Mg(2+) as a cofactor.

Its subcellular location is the virion. The catalysed reaction is RNA(n) + a ribonucleoside 5'-triphosphate = RNA(n+1) + diphosphate. Its function is as follows. RNA-directed RNA polymerase that is involved in both transcription and genome replication. Together with VP3 capping enzyme, forms an enzyme complex positioned near the channels situated at each of the five-fold vertices of the core. Following infection, the outermost layer of the virus is lost, leaving a double-layered particle (DLP) made up of the core and VP6 shell. VP1 then catalyzes the transcription of fully conservative plus-strand genomic RNAs that are extruded through the DLP's channels into the cytoplasm where they function as mRNAs for translation of viral proteins. One copy of each of the viral (+)RNAs is also recruited during core assembly, together with newly synthesized polymerase complexes and VP2. The polymerase of these novo-formed particles catalyzes the synthesis of complementary minus-strands leading to dsRNA formation. To do so, the polymerase specifically recognizes and binds 4 bases 5'-UGUG-3' in the conserved 3'-sequence of plus-strand RNA templates. VP2 presumably activates the autoinhibited VP1-RNA complex to coordinate packaging and genome replication. Once dsRNA synthesis is complete, the polymerase switches to the transcriptional mode, thus providing secondary transcription. The sequence is that of RNA-directed RNA polymerase from Homo sapiens (Human).